The chain runs to 158 residues: Small ribosomal subunit protein uS19 (158 aa).

Belongs to the universal ribosomal protein uS19 family.

Protein S19 forms a complex with S13 that binds strongly to the 16S ribosomal RNA. The chain is Small ribosomal subunit protein uS19 from Pyrobaculum calidifontis (strain DSM 21063 / JCM 11548 / VA1).